A 384-amino-acid chain; its full sequence is Spermidine/putrescine import ATP-binding protein PotA (384 aa).

Positions 6 to 238 constitute an ABC transporter domain; the sequence is ITFNNVSKTF…PINHFVANFI (233 aa). Residue 40-47 participates in ATP binding; sequence GASGSGKS.

It belongs to the ABC transporter superfamily. Spermidine/putrescine importer (TC 3.A.1.11.1) family. The complex is composed of two ATP-binding proteins (PotA), two transmembrane proteins (PotB and PotC) and a solute-binding protein (PotD).

The protein resides in the cell membrane. The catalysed reaction is ATP + H2O + polyamine-[polyamine-binding protein]Side 1 = ADP + phosphate + polyamineSide 2 + [polyamine-binding protein]Side 1.. Functionally, part of the ABC transporter complex PotABCD involved in spermidine/putrescine import. Responsible for energy coupling to the transport system. The sequence is that of Spermidine/putrescine import ATP-binding protein PotA from Streptococcus pyogenes serotype M6 (strain ATCC BAA-946 / MGAS10394).